A 359-amino-acid chain; its full sequence is Beta-hexosaminidase (359 aa).

Substrate is bound by residues Asp64, Arg72, Arg138, and 168–169 (KH). The active-site Proton donor/acceptor is the His181. The active-site Nucleophile is Asp252.

The protein belongs to the glycosyl hydrolase 3 family. NagZ subfamily.

It is found in the cytoplasm. It catalyses the reaction Hydrolysis of terminal non-reducing N-acetyl-D-hexosamine residues in N-acetyl-beta-D-hexosaminides.. It functions in the pathway cell wall biogenesis; peptidoglycan recycling. Plays a role in peptidoglycan recycling by cleaving the terminal beta-1,4-linked N-acetylglucosamine (GlcNAc) from peptide-linked peptidoglycan fragments, giving rise to free GlcNAc, anhydro-N-acetylmuramic acid and anhydro-N-acetylmuramic acid-linked peptides. The chain is Beta-hexosaminidase from Thiobacillus denitrificans (strain ATCC 25259 / T1).